We begin with the raw amino-acid sequence, 460 residues long: Phosphoglucomutase (460 aa).

Ser103 serves as the catalytic Phosphoserine intermediate. Ser103 is a binding site for Mg(2+). Residues 103 to 104 and Lys113 contribute to the substrate site; that span reads SH. 3 residues coordinate Mg(2+): Asp239, Asp241, and Asp243. Substrate contacts are provided by residues 243 to 244, Thr303, and 322 to 324; these read DR and EMS.

This sequence belongs to the phosphohexose mutase family. Mg(2+) serves as cofactor.

Its subcellular location is the cytoplasm. It catalyses the reaction alpha-D-glucose 1-phosphate = alpha-D-glucose 6-phosphate. Functionally, this enzyme participates in both the breakdown and synthesis of glucose. The polypeptide is Phosphoglucomutase (pgm) (Neisseria gonorrhoeae).